The sequence spans 684 residues: Fidgetin-like protein 2 (684 aa).

The span at 27 to 41 shows a compositional bias: polar residues; sequence PEQHLDVSSTTSSPA. Disordered regions lie at residues 27–48, 99–179, and 292–403; these read PEQH…ELYS, PGAF…PHSS, and LDEE…SDPM. Residues 160–179 are compositionally biased toward low complexity; sequence SNLSDSGYSGSSSCSGPHSS. A431 is a binding site for ATP.

The protein belongs to the AAA ATPase family. It depends on Mg(2+) as a cofactor. Highly expressed in vascular endothelial cells and neuronal cells.

Its subcellular location is the cytoplasm. It is found in the cell cortex. The enzyme catalyses ATP + H2O = ADP + phosphate + H(+). Its function is as follows. Microtubule-severing enzyme that negatively regulates cell migration and wound healing. In migrating cells, targets dynamic microtubules (MTs) at the leading edge and severs them, thereby suppressing motility. Negative regulator of axon regeneration that suppresses axonal growth by selectively severing dynamic MTs in the distal axon shaft and growth cone. Contributes to proper cell branching during endothelial and neuronal development. The chain is Fidgetin-like protein 2 (fignl2) from Danio rerio (Zebrafish).